The following is a 313-amino-acid chain: Ribosomal RNA small subunit methyltransferase H (313 aa).

Residues 34–36, D54, F81, D102, and Q109 each bind S-adenosyl-L-methionine; that span reads GGH. Positions 289–313 are disordered; it reads IAGPEETDRNPRARSAKLRAAEKLG.

This sequence belongs to the methyltransferase superfamily. RsmH family.

The protein resides in the cytoplasm. It carries out the reaction cytidine(1402) in 16S rRNA + S-adenosyl-L-methionine = N(4)-methylcytidine(1402) in 16S rRNA + S-adenosyl-L-homocysteine + H(+). Functionally, specifically methylates the N4 position of cytidine in position 1402 (C1402) of 16S rRNA. This Trichlorobacter lovleyi (strain ATCC BAA-1151 / DSM 17278 / SZ) (Geobacter lovleyi) protein is Ribosomal RNA small subunit methyltransferase H.